The sequence spans 257 residues: Protein vip1 (257 aa).

An RRM domain is found at 3–76 (NQVIVTNISP…NKIQITSEDG (74 aa)). The tract at residues 74–99 (EDGGAASTTDQGGAGGDQAARQEDKP) is disordered. The segment covering 75–84 (DGGAASTTDQ) has biased composition (low complexity). Phosphoserine is present on residues S132 and S177. Residues 217–257 (ARRLADAKNQAEGTASPASSTPTAPAEKEPTAPTTESKTTE) form a disordered region. Position 230 is a phosphothreonine (T230). The span at 230–257 (TASPASSTPTAPAEKEPTAPTTESKTTE) shows a compositional bias: low complexity. A phosphoserine mark is found at S232 and S235.

This Schizosaccharomyces pombe (strain 972 / ATCC 24843) (Fission yeast) protein is Protein vip1 (vip1).